The primary structure comprises 137 residues: Ribosomal RNA large subunit methyltransferase H (137 aa).

Residues Leu-56, Gly-85, and 104–109 each bind S-adenosyl-L-methionine; that span reads LSPLTF.

It belongs to the RNA methyltransferase RlmH family. As to quaternary structure, homodimer.

Its subcellular location is the cytoplasm. The catalysed reaction is pseudouridine(1915) in 23S rRNA + S-adenosyl-L-methionine = N(3)-methylpseudouridine(1915) in 23S rRNA + S-adenosyl-L-homocysteine + H(+). Specifically methylates the pseudouridine at position 1915 (m3Psi1915) in 23S rRNA. This chain is Ribosomal RNA large subunit methyltransferase H, found in Prochlorococcus marinus subsp. pastoris (strain CCMP1986 / NIES-2087 / MED4).